Here is a 610-residue protein sequence, read N- to C-terminus: Methionine--tRNA ligase (610 aa).

The 'HIGH' region motif lies at 12–22; the sequence is PYANGPRHIGH. Residues cysteine 144, cysteine 147, cysteine 157, and cysteine 160 each coordinate Zn(2+). Residues 348–352 carry the 'KMSKS' region motif; that stretch reads KFSSS. Position 351 (serine 351) interacts with ATP.

The protein belongs to the class-I aminoacyl-tRNA synthetase family. MetG type 1 subfamily. Monomer. Zn(2+) serves as cofactor.

It is found in the cytoplasm. The catalysed reaction is tRNA(Met) + L-methionine + ATP = L-methionyl-tRNA(Met) + AMP + diphosphate. In terms of biological role, is required not only for elongation of protein synthesis but also for the initiation of all mRNA translation through initiator tRNA(fMet) aminoacylation. In Corynebacterium glutamicum (strain R), this protein is Methionine--tRNA ligase.